The following is a 435-amino-acid chain: Serine--tRNA ligase (435 aa).

The tract at residues Gln41–Ala70 is disordered. Residues Ala49 to Ile58 are compositionally biased toward polar residues. Position 242–244 (Thr242–Glu244) interacts with L-serine. Arg273 to Glu275 contributes to the ATP binding site. Glu296 provides a ligand contact to L-serine. Position 360-363 (Glu360–Ser363) interacts with ATP. L-serine is bound at residue Ser396.

It belongs to the class-II aminoacyl-tRNA synthetase family. Type-1 seryl-tRNA synthetase subfamily. As to quaternary structure, homodimer. The tRNA molecule binds across the dimer.

Its subcellular location is the cytoplasm. It carries out the reaction tRNA(Ser) + L-serine + ATP = L-seryl-tRNA(Ser) + AMP + diphosphate + H(+). The enzyme catalyses tRNA(Sec) + L-serine + ATP = L-seryl-tRNA(Sec) + AMP + diphosphate + H(+). The protein operates within aminoacyl-tRNA biosynthesis; selenocysteinyl-tRNA(Sec) biosynthesis; L-seryl-tRNA(Sec) from L-serine and tRNA(Sec): step 1/1. Its function is as follows. Catalyzes the attachment of serine to tRNA(Ser). Is also able to aminoacylate tRNA(Sec) with serine, to form the misacylated tRNA L-seryl-tRNA(Sec), which will be further converted into selenocysteinyl-tRNA(Sec). The protein is Serine--tRNA ligase of Aliivibrio fischeri (strain ATCC 700601 / ES114) (Vibrio fischeri).